The sequence spans 252 residues: Hydroxyacylglutathione hydrolase (252 aa).

H54, H56, D58, H59, H113, D132, and H170 together coordinate Zn(2+).

This sequence belongs to the metallo-beta-lactamase superfamily. Glyoxalase II family. In terms of assembly, monomer. The cofactor is Zn(2+).

It carries out the reaction an S-(2-hydroxyacyl)glutathione + H2O = a 2-hydroxy carboxylate + glutathione + H(+). The protein operates within secondary metabolite metabolism; methylglyoxal degradation; (R)-lactate from methylglyoxal: step 2/2. In terms of biological role, thiolesterase that catalyzes the hydrolysis of S-D-lactoyl-glutathione to form glutathione and D-lactic acid. This Thermosynechococcus vestitus (strain NIES-2133 / IAM M-273 / BP-1) protein is Hydroxyacylglutathione hydrolase.